The chain runs to 599 residues: Elongation factor 4 (599 aa).

In terms of domain architecture, tr-type G spans 2-184 (KNIRNFSIIA…RLVRDIPPPQ (183 aa)). GTP contacts are provided by residues 14–19 (DHGKST) and 131–134 (NKID).

It belongs to the TRAFAC class translation factor GTPase superfamily. Classic translation factor GTPase family. LepA subfamily.

It localises to the cell inner membrane. The enzyme catalyses GTP + H2O = GDP + phosphate + H(+). Required for accurate and efficient protein synthesis under certain stress conditions. May act as a fidelity factor of the translation reaction, by catalyzing a one-codon backward translocation of tRNAs on improperly translocated ribosomes. Back-translocation proceeds from a post-translocation (POST) complex to a pre-translocation (PRE) complex, thus giving elongation factor G a second chance to translocate the tRNAs correctly. Binds to ribosomes in a GTP-dependent manner. This Salmonella gallinarum (strain 287/91 / NCTC 13346) protein is Elongation factor 4.